Reading from the N-terminus, the 307-residue chain is Mitochondrial 2-oxodicarboxylate carrier 2 (307 aa).

Helical transmembrane passes span 10–30, 76–95, 122–142, 171–191, 215–235, and 280–300; these read LPFI…LTVM, SRLY…KRAT, IAAG…FELI, GLYK…GGYF, LIAG…FDVV, and CRLA…MNFF. 3 Solcar repeats span residues 10 to 106, 116 to 200, and 209 to 299; these read LPFI…YQKI, TTQK…VRNS, and QKTR…MMNF.

It belongs to the mitochondrial carrier (TC 2.A.29) family.

The protein resides in the mitochondrion inner membrane. Transports C5-C7 oxodicarboxylates across the inner membranes of mitochondria. Can transport 2-oxoadipate, 2-oxoglutarate, adipate, glutarate, 2-oxopimelate, oxaloacetate, citrate and malate. The main physiological role is probably to supply 2-oxoadipate and 2-oxoglutarate from the mitochondrial matrix to the cytosol where they are used in the biosynthesis of lysine and glutamate, respectively, and in lysine catabolism. The polypeptide is Mitochondrial 2-oxodicarboxylate carrier 2 (ODC2) (Saccharomyces cerevisiae (strain ATCC 204508 / S288c) (Baker's yeast)).